The primary structure comprises 369 residues: Tryptophan 2,3-dioxygenase 2 (369 aa).

Substrate-binding positions include 36–40 (FIVVH) and R107. H303 serves as a coordination point for heme. Position 317 (T317) interacts with substrate.

This sequence belongs to the tryptophan 2,3-dioxygenase family. In terms of assembly, homotetramer. The cofactor is heme.

It carries out the reaction L-tryptophan + O2 = N-formyl-L-kynurenine. The protein operates within amino-acid degradation; L-tryptophan degradation via kynurenine pathway; L-kynurenine from L-tryptophan: step 1/2. Its function is as follows. Heme-dependent dioxygenase that catalyzes the oxidative cleavage of the L-tryptophan (L-Trp) pyrrole ring and converts L-tryptophan to N-formyl-L-kynurenine. Catalyzes the oxidative cleavage of the indole moiety. In Ralstonia nicotianae (strain ATCC BAA-1114 / GMI1000) (Ralstonia solanacearum), this protein is Tryptophan 2,3-dioxygenase 2.